Here is a 147-residue protein sequence, read N- to C-terminus: Hemoglobin subunit beta (147 aa).

Val2 is subject to N-acetylvaline. Residues His3–His147 form the Globin domain. Thr13 is subject to Phosphothreonine. A Phosphoserine modification is found at Ser45. Lys60 is modified (N6-acetyllysine). His64 is a binding site for heme b. Lys83 bears the N6-acetyllysine mark. His93 contributes to the heme b binding site. An S-nitrosocysteine modification is found at Cys94. An N6-acetyllysine modification is found at Lys145.

Belongs to the globin family. In terms of assembly, heterotetramer of two alpha chains and two beta chains. Red blood cells.

Functionally, involved in oxygen transport from the lung to the various peripheral tissues. This chain is Hemoglobin subunit beta (HBB), found in Lagothrix lagotricha (Brown woolly monkey).